Reading from the N-terminus, the 214-residue chain is Adenylate kinase (214 aa).

10 to 15 (GAGKGT) contributes to the ATP binding site. The NMP stretch occupies residues 30–59 (STGDMLRAAIKAGTELGKQAKTLMDAGQLV). Residues T31, R36, 57–59 (QLV), 85–88 (GFPR), and Q92 contribute to the AMP site. Positions 122–159 (GRRVHPASGRSYHVVYNPPKVEGKDDVTGEDLIIRADD) are LID. Residues R123 and 132–133 (SY) contribute to the ATP site. 2 residues coordinate AMP: R156 and R167. Q200 provides a ligand contact to ATP.

The protein belongs to the adenylate kinase family. Monomer.

It localises to the cytoplasm. It catalyses the reaction AMP + ATP = 2 ADP. It functions in the pathway purine metabolism; AMP biosynthesis via salvage pathway; AMP from ADP: step 1/1. Functionally, catalyzes the reversible transfer of the terminal phosphate group between ATP and AMP. Plays an important role in cellular energy homeostasis and in adenine nucleotide metabolism. The chain is Adenylate kinase from Actinobacillus succinogenes (strain ATCC 55618 / DSM 22257 / CCUG 43843 / 130Z).